Here is a 1121-residue protein sequence, read N- to C-terminus: Potassium channel subfamily U member 1 (1121 aa).

Residues 1–24 (MSQTLLDSLNQKELTETSCTIEIQ) lie on the Extracellular side of the membrane. A helical membrane pass occupies residues 25–45 (AAFILSSLATFFGGLIILFLF). The Cytoplasmic portion of the chain corresponds to 46 to 101 (RIALKSSRSWKYVKGPRGLLELFSSRRIEANPLRKLYFHGVFRQRIEMLLSAQTVV). A helical transmembrane segment spans residues 102–122 (GQVLVILVFVLSIGSLVIYFI). Residues 123-137 (NSMDPVRRCSSYEDK) lie on the Extracellular side of the membrane. The helical transmembrane segment at 138-158 (IVHVDLSFNAFFSFYFGLRFW) threads the bilayer. Over 159–165 (AAEDKIK) the chain is Cytoplasmic. Residues 166–186 (FWLEMNSIVDIFTIPPTFISY) form a helical membrane-spanning segment. Residues 187-188 (YL) are Extracellular-facing. The helical; Voltage-sensor transmembrane segment at 189 to 209 (KSNWLGLRFLRALRLLELPKI) threads the bilayer. The Cytoplasmic portion of the chain corresponds to 210-226 (LQILQVIKTSNSVKLSK). Residues 227-247 (LLSIVISTWFTAAGFLHLVEN) traverse the membrane as a helical segment. The Extracellular segment spans residues 248-259 (SGDPWLNGRNSQ). Residues 260–282 (TMSYFESIYLVTATMSTVGFGDV) constitute an intramembrane region (pore-forming). The Selectivity for potassium motif lies at 276–279 (TVGF). Over 283–290 (VAKTSLGR) the chain is Extracellular. Residues 291 to 311 (IFIVFFTLGSLILFANYIPEM) traverse the membrane as a helical segment. At 312 to 1121 (VELFSTRKKY…LDASDIVQEK (810 aa)) the chain is on the cytoplasmic side. RCK N-terminal domains are found at residues 331–473 (KKFI…DNIL) and 718–889 (QNHI…DGML). Disordered stretches follow at residues 836-858 (SPTP…KERK) and 1052-1076 (DSSP…GSNF).

It belongs to the potassium channel family. Calcium-activated (TC 1.A.1.3) subfamily. KCa5.1/KCNU1 sub-subfamily. In terms of assembly, homotetramer; which constitutes the calcium-activated potassium channel. Interact with LRRC52; this interaction changes some channel gating properties, such as shifting gating to more negative potentials at a given pH. Testis-specific. Mainly expressed in spermatocytes. As to expression, expressed in testis, brain, eye and kidney.

It localises to the cell membrane. It is found in the cytoplasm. It carries out the reaction K(+)(in) = K(+)(out). Its activity is regulated as follows. Regulated by changes in cytosolic pH; activated by alkalization. In contrast to human KCNU1 is not activated by Ca(2+) or Mg(2+). The auxiliary subunit LRRC52 shifts the activation of KCNU1 to more negative potentials at a given pH. Functionally, testis-specific potassium channel activated by both intracellular pH and membrane voltage that mediates export of K(+). Represents the primary spermatozoan K(+) current. The channel underlies a pH-triggered membrane hyperpolarization during the process of sperm capacitation, as sperm encounter the alkaline environment near the ovum in the female reproductive tract, thereby playing an essential for male fertility. This is Potassium channel subfamily U member 1 (Kcnu1) from Mus musculus (Mouse).